The sequence spans 187 residues: MIILGIDEAGRGPLSGPVVAAGVILDQDKIIDGLADSKKLTEKKRQSLYQQIITHAKAYTIVEISPQQIDELNILQATLKAIHQVANNLERQFDKVLVDGNKLPNWDYNSEAIVKGDSKIIEISAASILAKVHRDNICLEHDRLYPQYGFAKHKGYPTKEHLENIKKYGVLDIHRKSYKPVQVLLNE.

An RNase H type-2 domain is found at 1–187 (MIILGIDEAG…YKPVQVLLNE (187 aa)). Residues D7, E8, and D99 each contribute to the a divalent metal cation site.

This sequence belongs to the RNase HII family. Requires Mn(2+) as cofactor. Mg(2+) is required as a cofactor.

The protein localises to the cytoplasm. The enzyme catalyses Endonucleolytic cleavage to 5'-phosphomonoester.. Functionally, endonuclease that specifically degrades the RNA of RNA-DNA hybrids. The sequence is that of Ribonuclease HII from Francisella tularensis subsp. holarctica (strain FTNF002-00 / FTA).